The chain runs to 353 residues: Methionine import ATP-binding protein MetN (353 aa).

An ABC transporter domain is found at 6–249 (LKNVDVDFPQ…PKQELTKKFV (244 aa)). Position 41–48 (41–48 (GFSGAGKS)) interacts with ATP.

This sequence belongs to the ABC transporter superfamily. Methionine importer (TC 3.A.1.24) family. In terms of assembly, the complex is composed of two ATP-binding proteins (MetN), two transmembrane proteins (MetI) and a solute-binding protein (MetQ).

It localises to the cell membrane. It catalyses the reaction L-methionine(out) + ATP + H2O = L-methionine(in) + ADP + phosphate + H(+). It carries out the reaction D-methionine(out) + ATP + H2O = D-methionine(in) + ADP + phosphate + H(+). Its function is as follows. Part of the ABC transporter complex MetNIQ involved in methionine import. Responsible for energy coupling to the transport system. In Lactobacillus acidophilus (strain ATCC 700396 / NCK56 / N2 / NCFM), this protein is Methionine import ATP-binding protein MetN.